The primary structure comprises 699 residues: Homeobox-leucine zipper protein HDG8 (699 aa).

The segment at 1-31 (MDNNGGGSSGNEQYTSGDAKQNGKRTCHRHT) is disordered. Residues 10-19 (GNEQYTSGDA) are compositionally biased toward polar residues. Residues 22–31 (NGKRTCHRHT) show a composition bias toward basic residues. Positions 23–82 (GKRTCHRHTPQQIQRLEAYFKECPHPDERQRNQLCRELKLEPDQIKFWFQNKRTQSKTQE) form a DNA-binding region, homeobox. The stretch at 89-149 (LLRGENETLQ…LKDHRDRISN (61 aa)) forms a coiled coil. The 235-residue stretch at 204-438 (AETDMSLLSE…LERMCERMAL (235 aa)) folds into the START domain.

It belongs to the HD-ZIP homeobox family. Class IV subfamily. As to quaternary structure, interacts with ANT. Expressed in the embryo at early stage and in the endosperm.

The protein resides in the nucleus. Probable transcription factor. This is Homeobox-leucine zipper protein HDG8 from Arabidopsis thaliana (Mouse-ear cress).